Consider the following 483-residue polypeptide: ATP synthase subunit beta (483 aa).

162 to 169 provides a ligand contact to ATP; the sequence is GGAGVGKT.

It belongs to the ATPase alpha/beta chains family. F-type ATPases have 2 components, CF(1) - the catalytic core - and CF(0) - the membrane proton channel. CF(1) has five subunits: alpha(3), beta(3), gamma(1), delta(1), epsilon(1). CF(0) has four main subunits: a(1), b(1), b'(1) and c(9-12).

The protein localises to the cellular thylakoid membrane. The enzyme catalyses ATP + H2O + 4 H(+)(in) = ADP + phosphate + 5 H(+)(out). Its function is as follows. Produces ATP from ADP in the presence of a proton gradient across the membrane. The catalytic sites are hosted primarily by the beta subunits. This chain is ATP synthase subunit beta, found in Synechocystis sp. (strain ATCC 27184 / PCC 6803 / Kazusa).